The primary structure comprises 382 residues: 1-deoxy-D-xylulose 5-phosphate reductoisomerase (382 aa).

NADPH is bound by residues Thr10, Gly11, Ser12, Ile13, Asn38, and Asn120. 1-deoxy-D-xylulose 5-phosphate is bound at residue Lys121. Residue Glu122 coordinates NADPH. Asp146 provides a ligand contact to Mn(2+). 1-deoxy-D-xylulose 5-phosphate is bound by residues Ser147, Glu148, Ser172, and His195. Residue Glu148 participates in Mn(2+) binding. An NADPH-binding site is contributed by Gly201. Residues Ser208, Asn213, Lys214, and Glu217 each contribute to the 1-deoxy-D-xylulose 5-phosphate site. Position 217 (Glu217) interacts with Mn(2+).

The protein belongs to the DXR family. It depends on Mg(2+) as a cofactor. Mn(2+) serves as cofactor.

It catalyses the reaction 2-C-methyl-D-erythritol 4-phosphate + NADP(+) = 1-deoxy-D-xylulose 5-phosphate + NADPH + H(+). Its pathway is isoprenoid biosynthesis; isopentenyl diphosphate biosynthesis via DXP pathway; isopentenyl diphosphate from 1-deoxy-D-xylulose 5-phosphate: step 1/6. Its function is as follows. Catalyzes the NADPH-dependent rearrangement and reduction of 1-deoxy-D-xylulose-5-phosphate (DXP) to 2-C-methyl-D-erythritol 4-phosphate (MEP). The protein is 1-deoxy-D-xylulose 5-phosphate reductoisomerase of Thermoanaerobacter pseudethanolicus (strain ATCC 33223 / 39E) (Clostridium thermohydrosulfuricum).